The primary structure comprises 391 residues: Leucine aminopeptidase 1 (391 aa).

The signal sequence occupies residues 1–19 (MKLSIALALGATASTGVLA). Positions 20-91 (AVVPQQEPLI…YPTLHAGSYV (72 aa)) are excised as a propeptide. The N-linked (GlcNAc...) asparagine glycan is linked to asparagine 183. 2 residues coordinate Zn(2+): histidine 191 and aspartate 210. The N-linked (GlcNAc...) asparagine glycan is linked to asparagine 235. Positions 249 and 276 each coordinate Zn(2+). A disulfide bridge connects residues cysteine 325 and cysteine 329. A Zn(2+)-binding site is contributed by histidine 358.

It belongs to the peptidase M28 family. M28E subfamily. In terms of assembly, monomer. Zn(2+) is required as a cofactor.

The protein localises to the secreted. Extracellular aminopeptidase that allows assimilation of proteinaceous substrates. The polypeptide is Leucine aminopeptidase 1 (lap1) (Aspergillus niger (strain ATCC MYA-4892 / CBS 513.88 / FGSC A1513)).